A 224-amino-acid chain; its full sequence is Octanoyltransferase (224 aa).

Residues 38–213 (SATVDELWWV…YLVRRLGYSA (176 aa)) form the BPL/LPL catalytic domain. Substrate is bound by residues 77–84 (RGGQVTYH), 144–146 (SLG), and 157–159 (GLS). Cys-175 serves as the catalytic Acyl-thioester intermediate.

This sequence belongs to the LipB family.

The protein localises to the cytoplasm. The enzyme catalyses octanoyl-[ACP] + L-lysyl-[protein] = N(6)-octanoyl-L-lysyl-[protein] + holo-[ACP] + H(+). It participates in protein modification; protein lipoylation via endogenous pathway; protein N(6)-(lipoyl)lysine from octanoyl-[acyl-carrier-protein]: step 1/2. Catalyzes the transfer of endogenously produced octanoic acid from octanoyl-acyl-carrier-protein onto the lipoyl domains of lipoate-dependent enzymes. Lipoyl-ACP can also act as a substrate although octanoyl-ACP is likely to be the physiological substrate. The polypeptide is Octanoyltransferase (Nitrosococcus oceani (strain ATCC 19707 / BCRC 17464 / JCM 30415 / NCIMB 11848 / C-107)).